A 354-amino-acid chain; its full sequence is Glutamine synthetase (354 aa).

The region spanning 22-101 (VQAEYVWIDG…VLAETFNNDG (80 aa)) is the GS beta-grasp domain. The 247-residue stretch at 108-354 (HRHHTKKVMD…IIVETTVLDK (247 aa)) folds into the GS catalytic domain.

This sequence belongs to the glutamine synthetase family. As to quaternary structure, homooctamer.

It is found in the cytoplasm. It catalyses the reaction L-glutamate + NH4(+) + ATP = L-glutamine + ADP + phosphate + H(+). This Suillus bovinus (Jersey cow bolete) protein is Glutamine synthetase (GLNA).